The primary structure comprises 426 residues: Serine--tRNA ligase (426 aa).

233–235 is an L-serine binding site; that stretch reads TAE. 264–266 is an ATP binding site; sequence RSE. Glu-287 contacts L-serine. 351–354 contacts ATP; sequence EISS. L-serine is bound at residue Ser-387.

It belongs to the class-II aminoacyl-tRNA synthetase family. Type-1 seryl-tRNA synthetase subfamily. As to quaternary structure, homodimer. The tRNA molecule binds across the dimer.

It localises to the cytoplasm. The enzyme catalyses tRNA(Ser) + L-serine + ATP = L-seryl-tRNA(Ser) + AMP + diphosphate + H(+). It carries out the reaction tRNA(Sec) + L-serine + ATP = L-seryl-tRNA(Sec) + AMP + diphosphate + H(+). It functions in the pathway aminoacyl-tRNA biosynthesis; selenocysteinyl-tRNA(Sec) biosynthesis; L-seryl-tRNA(Sec) from L-serine and tRNA(Sec): step 1/1. Functionally, catalyzes the attachment of serine to tRNA(Ser). Is also able to aminoacylate tRNA(Sec) with serine, to form the misacylated tRNA L-seryl-tRNA(Sec), which will be further converted into selenocysteinyl-tRNA(Sec). This is Serine--tRNA ligase from Pseudomonas syringae pv. tomato (strain ATCC BAA-871 / DC3000).